The following is a 330-amino-acid chain: Pantothenate synthetase 2 (330 aa).

Histidine 55 (proton donor) is an active-site residue. Residues 167-170, valine 196, and 204-207 contribute to the ATP site; these read GEKD and ASSR.

Belongs to the pantothenate synthetase family. Homodimer.

It is found in the cytoplasm. The enzyme catalyses (R)-pantoate + beta-alanine + ATP = (R)-pantothenate + AMP + diphosphate + H(+). Its pathway is cofactor biosynthesis; (R)-pantothenate biosynthesis; (R)-pantothenate from (R)-pantoate and beta-alanine: step 1/1. In terms of biological role, catalyzes the condensation of pantoate with beta-alanine in an ATP-dependent reaction via a pantoyl-adenylate intermediate. In Frankia alni (strain DSM 45986 / CECT 9034 / ACN14a), this protein is Pantothenate synthetase 2.